The sequence spans 1058 residues: Carbamoyl phosphate synthase large chain (1058 aa).

The interval 1–401 is carboxyphosphate synthetic domain; it reads MPKRKDIQKI…SLLKACRSLE (401 aa). Residues R129, R169, G175, G176, R208, I210, E215, G241, I242, H243, Q284, and E298 each contribute to the ATP site. In terms of domain architecture, ATP-grasp 1 spans 133–327; the sequence is KQLMQELDQP…IAKLAAKIAV (195 aa). Residues Q284, E298, and N300 each contribute to the Mg(2+) site. Q284, E298, and N300 together coordinate Mn(2+). The segment at 402–546 is oligomerization domain; it reads IGVCHNEMTS…YSTYELENES (145 aa). Residues 547-929 are carbamoyl phosphate synthetic domain; that stretch reads VQSNKESILV…ALYKAFEANN (383 aa). Residues 671–861 form the ATP-grasp 2 domain; it reads EKALKELGIP…MAQIATKLIL (191 aa). ATP-binding residues include R707, S746, I748, E752, G777, V778, H779, S780, Q820, and E832. Residues Q820, E832, and N834 each coordinate Mg(2+). Residues Q820, E832, and N834 each contribute to the Mn(2+) site. Positions 930 to 1058 constitute an MGS-like domain; that stretch reads SHLSEFGQIV…ESRCFNIEAI (129 aa). The allosteric domain stretch occupies residues 930-1058; the sequence is SHLSEFGQIV…ESRCFNIEAI (129 aa).

This sequence belongs to the CarB family. In terms of assembly, composed of two chains; the small (or glutamine) chain promotes the hydrolysis of glutamine to ammonia, which is used by the large (or ammonia) chain to synthesize carbamoyl phosphate. Tetramer of heterodimers (alpha,beta)4. The cofactor is Mg(2+). Mn(2+) serves as cofactor.

The catalysed reaction is hydrogencarbonate + L-glutamine + 2 ATP + H2O = carbamoyl phosphate + L-glutamate + 2 ADP + phosphate + 2 H(+). It catalyses the reaction hydrogencarbonate + NH4(+) + 2 ATP = carbamoyl phosphate + 2 ADP + phosphate + 2 H(+). It participates in amino-acid biosynthesis; L-arginine biosynthesis; carbamoyl phosphate from bicarbonate: step 1/1. It functions in the pathway pyrimidine metabolism; UMP biosynthesis via de novo pathway; (S)-dihydroorotate from bicarbonate: step 1/3. Large subunit of the glutamine-dependent carbamoyl phosphate synthetase (CPSase). CPSase catalyzes the formation of carbamoyl phosphate from the ammonia moiety of glutamine, carbonate, and phosphate donated by ATP, constituting the first step of 2 biosynthetic pathways, one leading to arginine and/or urea and the other to pyrimidine nucleotides. The large subunit (synthetase) binds the substrates ammonia (free or transferred from glutamine from the small subunit), hydrogencarbonate and ATP and carries out an ATP-coupled ligase reaction, activating hydrogencarbonate by forming carboxy phosphate which reacts with ammonia to form carbamoyl phosphate. The chain is Carbamoyl phosphate synthase large chain from Streptococcus pyogenes serotype M18 (strain MGAS8232).